Reading from the N-terminus, the 88-residue chain is Sec-independent protein translocase protein TatA (88 aa).

The chain crosses the membrane as a helical span at residues Met-1–Gly-21. The span at Met-43–Ala-52 shows a compositional bias: basic and acidic residues. The segment at Met-43–Ala-88 is disordered. A compositionally biased stretch (polar residues) spans Ile-57–Arg-71.

The protein belongs to the TatA/E family. In terms of assembly, the Tat system comprises two distinct complexes: a TatABC complex, containing multiple copies of TatA, TatB and TatC subunits, and a separate TatA complex, containing only TatA subunits. Substrates initially bind to the TatABC complex, which probably triggers association of the separate TatA complex to form the active translocon.

Its subcellular location is the cell membrane. Part of the twin-arginine translocation (Tat) system that transports large folded proteins containing a characteristic twin-arginine motif in their signal peptide across membranes. TatA could form the protein-conducting channel of the Tat system. The polypeptide is Sec-independent protein translocase protein TatA (Mycobacterium marinum (strain ATCC BAA-535 / M)).